A 108-amino-acid polypeptide reads, in one-letter code: Large ribosomal subunit protein uL24 (108 aa).

This sequence belongs to the universal ribosomal protein uL24 family. As to quaternary structure, part of the 50S ribosomal subunit.

Its function is as follows. One of two assembly initiator proteins, it binds directly to the 5'-end of the 23S rRNA, where it nucleates assembly of the 50S subunit. Functionally, one of the proteins that surrounds the polypeptide exit tunnel on the outside of the subunit. This chain is Large ribosomal subunit protein uL24, found in Geobacter sulfurreducens (strain ATCC 51573 / DSM 12127 / PCA).